Here is a 284-residue protein sequence, read N- to C-terminus: F-box only protein 6 (284 aa).

In terms of domain architecture, F-box spans 1–48 (MVNINELPENILLELFTHVPAPQLLRNCRLVCSLWRDLIDVMTLWKRK). Residues 69–250 (FYILCSLQRN…VTNSSIIVSH (182 aa)) form the FBA domain. 5 positions are modified to phosphoserine: Ser-249, Ser-268, Ser-275, Ser-278, and Ser-283.

Part of a SCF (SKP1-cullin-F-box) protein ligase complex. Interacts with VCP, CHEK1 and CUL1.

The protein resides in the cytoplasm. It participates in protein modification; protein ubiquitination. In terms of biological role, substrate-recognition component of some SCF (SKP1-CUL1-F-box protein)-type E3 ubiquitin ligase complexes. Involved in endoplasmic reticulum-associated degradation pathway (ERAD) for misfolded lumenal proteins by recognizing and binding sugar chains on unfolded glycoproteins that are retrotranslocated into the cytosol and promoting their ubiquitination and subsequent degradation. Able to recognize and bind denatured glycoproteins, which are modified with not only high-mannose but also complex-type oligosaccharides. Also recognizes sulfated glycans. Also involved in DNA damage response by specifically recognizing activated CHEK1 (phosphorylated on 'Ser-345'), promoting its ubiquitination and degradation. Ubiquitination of CHEK1 is required to ensure that activated CHEK1 does not accumulate as cells progress through S phase, or when replication forks encounter transient impediments during normal DNA replication. In Rattus norvegicus (Rat), this protein is F-box only protein 6 (Fbxo6).